Consider the following 315-residue polypeptide: Acetyl-coenzyme A carboxylase carboxyl transferase subunit alpha (315 aa).

Residues 32 to 293 (NISDEIARLQ…RADLVQQLDM (262 aa)) enclose the CoA carboxyltransferase C-terminal domain.

The protein belongs to the AccA family. In terms of assembly, acetyl-CoA carboxylase is a heterohexamer composed of biotin carboxyl carrier protein (AccB), biotin carboxylase (AccC) and two subunits each of ACCase subunit alpha (AccA) and ACCase subunit beta (AccD).

The protein resides in the cytoplasm. The enzyme catalyses N(6)-carboxybiotinyl-L-lysyl-[protein] + acetyl-CoA = N(6)-biotinyl-L-lysyl-[protein] + malonyl-CoA. Its pathway is lipid metabolism; malonyl-CoA biosynthesis; malonyl-CoA from acetyl-CoA: step 1/1. In terms of biological role, component of the acetyl coenzyme A carboxylase (ACC) complex. First, biotin carboxylase catalyzes the carboxylation of biotin on its carrier protein (BCCP) and then the CO(2) group is transferred by the carboxyltransferase to acetyl-CoA to form malonyl-CoA. This chain is Acetyl-coenzyme A carboxylase carboxyl transferase subunit alpha, found in Pseudomonas putida (strain ATCC 47054 / DSM 6125 / CFBP 8728 / NCIMB 11950 / KT2440).